Reading from the N-terminus, the 287-residue chain is 4-diphosphocytidyl-2-C-methyl-D-erythritol kinase (287 aa).

The active site involves Lys10. Residue 92–102 (PLAAGLAGGSA) participates in ATP binding. Residue Asp134 is part of the active site.

Belongs to the GHMP kinase family. IspE subfamily.

The enzyme catalyses 4-CDP-2-C-methyl-D-erythritol + ATP = 4-CDP-2-C-methyl-D-erythritol 2-phosphate + ADP + H(+). It functions in the pathway isoprenoid biosynthesis; isopentenyl diphosphate biosynthesis via DXP pathway; isopentenyl diphosphate from 1-deoxy-D-xylulose 5-phosphate: step 3/6. Functionally, catalyzes the phosphorylation of the position 2 hydroxy group of 4-diphosphocytidyl-2C-methyl-D-erythritol. This is 4-diphosphocytidyl-2-C-methyl-D-erythritol kinase from Caldanaerobacter subterraneus subsp. tengcongensis (strain DSM 15242 / JCM 11007 / NBRC 100824 / MB4) (Thermoanaerobacter tengcongensis).